A 502-amino-acid polypeptide reads, in one-letter code: Cobyric acid synthase (502 aa).

In terms of domain architecture, GATase cobBQ-type spans 260–433 (ILRVAVCAIP…WHGSLESDGF (174 aa)). C341 acts as the Nucleophile in catalysis. H425 is an active-site residue.

Belongs to the CobB/CobQ family. CobQ subfamily.

It functions in the pathway cofactor biosynthesis; adenosylcobalamin biosynthesis. In terms of biological role, catalyzes amidations at positions B, D, E, and G on adenosylcobyrinic A,C-diamide. NH(2) groups are provided by glutamine, and one molecule of ATP is hydrogenolyzed for each amidation. This Streptomyces avermitilis (strain ATCC 31267 / DSM 46492 / JCM 5070 / NBRC 14893 / NCIMB 12804 / NRRL 8165 / MA-4680) protein is Cobyric acid synthase.